Consider the following 336-residue polypeptide: Nuclear envelope-associated protein 1 (336 aa).

Residues 125–261 (CSMLKQQLDD…RRTDQDLKKK (137 aa)) are a coiled coil. The Bipartite nuclear localization signal motif lies at 240–261 (KTKELESQLEKQRRTDQDLKKK). The chain crosses the membrane as a helical span at residues 313-330 (FWDNSGFKIVVSMSMLML).

As to quaternary structure, forms heteromers with NEAP2 and NEAP3. Interacts with SUN1; SUN2 and bZIP18.

The protein localises to the nucleus inner membrane. It is found in the nucleus. It localises to the nucleoplasm. This Arabidopsis thaliana (Mouse-ear cress) protein is Nuclear envelope-associated protein 1.